Reading from the N-terminus, the 1027-residue chain is Presequence protease, mitochondrial (1027 aa).

Residues 1 to 22 (MIRQCRAGLRLCRALYQTSYRW) constitute a mitochondrion transit peptide. Position 98 (histidine 98) interacts with Zn(2+). Glutamate 101 acts as the Proton acceptor in catalysis. Residues histidine 102 and glutamate 199 each contribute to the Zn(2+) site. Cysteine 113 and cysteine 550 are joined by a disulfide. Positions 800–829 (KKERKSIRPHVVEKSSSPSSSGSEISRRAT) are disordered. The segment covering 814–823 (SSSPSSSGSE) has biased composition (low complexity).

The protein belongs to the peptidase M16 family. PreP subfamily. In terms of assembly, monomer and homodimer; homodimerization is induced by binding of the substrate. It depends on Zn(2+) as a cofactor. Post-translationally, a disulfide bond locks the enzyme in the closed conformation preventing substrate entry into the catalytic chamber.

Its subcellular location is the mitochondrion matrix. Its activity is regulated as follows. Mainly exists in a closed and catalytically competent conformation but a closed-to-open switch allows substrate entry into the catalytic chamber. Substrate binding induces closure and dimerization. A disulfide bond may lock the enzyme in a closed conformation preventing substrate entry into the catalytic chamber, participating in redox regulation of the enzyme. Inhibited by metal-chelating agents. Inhibited by nickel and zinc excess, and slightly activated by manganese. Metalloendopeptidase of the mitochondrial matrix that functions in peptide cleavage and degradation rather than in protein processing. Has an ATP-independent activity. Specifically cleaves peptides in the range of 5 to 65 residues. Shows a preference for cleavage after small polar residues and before basic residues, but without any positional preference. Degrades the transit peptides of mitochondrial proteins after their cleavage. Also degrades other unstructured peptides. This is Presequence protease, mitochondrial (pitrm1) from Xenopus tropicalis (Western clawed frog).